A 437-amino-acid polypeptide reads, in one-letter code: uncharacterized protein (437 aa).

Basic residues-rich tracts occupy residues 1–29, 81–91, and 101–118; these read MDTPLRGRRAAGRGVRARARPRTRRRHRN, LRGRHPRVRRV, and RRRHLLRRRVGGHRGRNR. Disordered regions lie at residues 1-31 and 77-437; these read MDTPLRGRRAAGRGVRARARPRTRRRHRNDH and EHVP…QGTR. Residues 119-132 show a composition bias toward basic and acidic residues; that stretch reads HAGDRRAPGVDSRL. The segment covering 133–142 has biased composition (basic residues); sequence RQQHQHPRGR. The segment covering 143–164 has biased composition (basic and acidic residues); the sequence is HASDRVQDGAHPRRQRLREQPR. Basic residues predominate over residues 165–190; sequence HAGRPRRRQPPRRGRSRGTHRRHLRQ. 2 stretches are compositionally biased toward basic and acidic residues: residues 198–209 and 217–253; these read GPDEDQAREFRG and HPPTARDVLRGEPGHGDGHHLEGRRGRPRPQGREAGR. Basic residues-rich tracts occupy residues 284-293 and 324-348; these read TVHRGGRLRG and PHSRKRRDTGAHHRHWRRRRRRVRH. Low complexity predominate over residues 371–382; that stretch reads DAAAYASVPAHA.

This is an uncharacterized protein from Haloferax lucentense (strain DSM 14919 / JCM 9276 / NCIMB 13854 / Aa 2.2) (Haloferax alicantei).